The primary structure comprises 479 residues: Poly(A) polymerase catalytic subunit (479 aa).

Active-site residues include Asp202 and Asp204. Ca(2+)-binding residues include Asp202, Asp204, and Asp253.

This sequence belongs to the poxviridae poly(A) polymerase catalytic subunit family. In terms of assembly, heterodimer of a large (catalytic) subunit and a small (regulatory) subunit.

It catalyses the reaction RNA(n) + ATP = RNA(n)-3'-adenine ribonucleotide + diphosphate. Its function is as follows. Polymerase that creates the 3'-poly(A) tail of mRNA's. This is Poly(A) polymerase catalytic subunit (OPG063) from Bos taurus (Bovine).